The following is a 338-amino-acid chain: Dehydrogenase/reductase SDR family member 7 (338 aa).

An N-terminal signal peptide occupies residues 1–28 (MSWELLLWLLALCALILPLVQLLRFLRA). NAD(+) is bound by residues S60 and I62. S190 serves as a coordination point for substrate. The NAD(+) site is built by Y203, K207, and S239. Y203 serves as the catalytic Proton acceptor.

It belongs to the short-chain dehydrogenases/reductases (SDR) family.

Its subcellular location is the endoplasmic reticulum membrane. It carries out the reaction all-trans-retinol + NADP(+) = all-trans-retinal + NADPH + H(+). The catalysed reaction is 5alpha-androstane-3alpha,17beta-diol + NADP(+) = 17beta-hydroxy-5alpha-androstan-3-one + NADPH + H(+). Functionally, NADPH-dependent oxidoreductase which catalyzes the reduction of a variety of compounds bearing carbonyl groups including steroids, retinoids and xenobiotics. Catalyzes the reduction/inactivation of 5alpha-dihydrotestosterone to 3alpha-androstanediol, with a possible role in the modulation of androgen receptor function. Involved in the reduction of all-trans-retinal to all-trans-retinol. Converts cortisone to 20beta-dihydrocortisone in vitro, although the physiological relevance of this activity is questionable. Reduces exogenous compounds such as quinones (1,2-naphtoquinone, 9,10-phenantrenequinone and benzoquinone) and other xenobiotics (alpha-diketones) in vitro, suggesting a role in the biotransformation of xenobiotics with carbonyl group. A dehydrogenase activity has not been detected so far. May play a role as tumor suppressor. The chain is Dehydrogenase/reductase SDR family member 7 from Mus musculus (Mouse).